Consider the following 828-residue polypeptide: Periplasmic nitrate reductase (828 aa).

A signal peptide (tat-type signal) is located at residues 1–31 (MKLSRRSFMKANAVAAAAAAAGLSVPGVARA). The region spanning 39–95 (IKWDKAPCRFCGTGCGVLVGTQQGRVVACQGDPDAPVNRGLNCIKGYFLPKIMYGKD) is the 4Fe-4S Mo/W bis-MGD-type domain. [4Fe-4S] cluster is bound by residues Cys46, Cys49, Cys53, and Cys81. Mo-bis(molybdopterin guanine dinucleotide) is bound by residues Lys83, Gln150, Asn175, Cys179, 212–219 (WGANMAEM), 243–247 (STYQH), 262–264 (QSD), Met372, Gln376, Asn482, 508–509 (SD), Lys531, Asp558, and 718–727 (TGRVLEHWHT). Residue Phe794 participates in substrate binding. Mo-bis(molybdopterin guanine dinucleotide) is bound by residues Asn802 and Lys819.

Belongs to the prokaryotic molybdopterin-containing oxidoreductase family. NasA/NapA/NarB subfamily. As to quaternary structure, component of the periplasmic nitrate reductase NapAB complex composed of NapA and NapB. [4Fe-4S] cluster serves as cofactor. It depends on Mo-bis(molybdopterin guanine dinucleotide) as a cofactor. In terms of processing, predicted to be exported by the Tat system. The position of the signal peptide cleavage has not been experimentally proven.

The protein localises to the periplasm. The enzyme catalyses 2 Fe(II)-[cytochrome] + nitrate + 2 H(+) = 2 Fe(III)-[cytochrome] + nitrite + H2O. Functionally, catalytic subunit of the periplasmic nitrate reductase complex NapAB. Receives electrons from NapB and catalyzes the reduction of nitrate to nitrite. The protein is Periplasmic nitrate reductase of Escherichia coli O6:K15:H31 (strain 536 / UPEC).